A 264-amino-acid chain; its full sequence is Iodotyrosine deiodinase (264 aa).

Residues 75–79 (RRTVR) and 103–104 (SG) each bind FMN. Residues Ala-105, Glu-132, Tyr-136, and Lys-157 each contribute to the 3-iodo-L-tyrosine site. FMN-binding positions include 212–214 (TST) and Arg-254.

This sequence belongs to the nitroreductase family. Requires FMN as cofactor.

The enzyme catalyses 2 iodide + L-tyrosine + 2 NADP(+) = 3,5-diiodo-L-tyrosine + 2 NADPH + H(+). It catalyses the reaction iodide + L-tyrosine + NADP(+) = 3-iodo-L-tyrosine + NADPH. The catalysed reaction is 3-iodo-L-tyrosine + iodide + NADP(+) = 3,5-diiodo-L-tyrosine + NADPH + H(+). It carries out the reaction L-tyrosine + chloride + NADP(+) = 3-chloro-L-tyrosine + NADPH. The enzyme catalyses bromide + L-tyrosine + NADP(+) = 3-bromo-L-tyrosine + NADPH. Functionally, catalyzes the dehalogenation of halotyrosines such as 3,5-diiodo-L-tyrosine. Likely to also catalyze the dehalogenation of other halotyrosines such as 3-bromo-L-tyrosine, 3-chloro-L-tyrosine and 3-iodo-L-tyrosine. The protein is Iodotyrosine deiodinase of Nematostella vectensis (Starlet sea anemone).